The sequence spans 311 residues: 4-diphosphocytidyl-2-C-methyl-D-erythritol kinase (311 aa).

Lys16 is an active-site residue. Residue 100-110 (PIGAGLAGGSS) coordinates ATP. Residue Asp142 is part of the active site.

The protein belongs to the GHMP kinase family. IspE subfamily.

The enzyme catalyses 4-CDP-2-C-methyl-D-erythritol + ATP = 4-CDP-2-C-methyl-D-erythritol 2-phosphate + ADP + H(+). The protein operates within isoprenoid biosynthesis; isopentenyl diphosphate biosynthesis via DXP pathway; isopentenyl diphosphate from 1-deoxy-D-xylulose 5-phosphate: step 3/6. In terms of biological role, catalyzes the phosphorylation of the position 2 hydroxy group of 4-diphosphocytidyl-2C-methyl-D-erythritol. This Prochlorococcus marinus (strain MIT 9215) protein is 4-diphosphocytidyl-2-C-methyl-D-erythritol kinase.